The chain runs to 704 residues: Glycogen [starch] synthase, liver (704 aa).

Ser8 is subject to Phosphoserine; by AMPK and PKA. Residue Ser11 is modified to Phosphoserine. Lys40 provides a ligand contact to UDP. Residues His205 and Arg211 each contribute to the UDP-alpha-D-glucose site. Alpha-D-glucose 6-phosphate is bound by residues His291, Glu292, Gln294, His297, and Lys301. Residue Arg331 coordinates UDP. Arg331 provides a ligand contact to UDP-alpha-D-glucose. His501 contributes to the alpha-D-glucose 6-phosphate binding site. 3 residues coordinate UDP-alpha-D-glucose: Glu510, Trp512, and Gly513. Thr515 lines the UDP pocket. Alpha-D-glucose 6-phosphate contacts are provided by Arg582 and Arg586. The segment at Lys620–Asn704 is disordered. Phosphoserine is present on Ser627. A phosphoserine; by GSK3-alpha and GSK3-beta mark is found at Ser641, Ser645, Ser649, and Ser653. Positions Ser647 to Ser657 are enriched in low complexity. At Ser657 the chain carries Phosphoserine; by CK2. Positions Asp658–Ala675 are enriched in acidic residues. Ser684 bears the Phosphoserine mark.

The protein belongs to the glycosyltransferase 3 family. As to quaternary structure, part of the glycogen synthase (GS)-glycogenin complex, a heterooctamer composed of a tetramer of GS and 2 dimers of glycogenin, where each GS protomer binds to one glycogenin subunit (via glycogenin C-terminus); the GS tetramer may dissociate from glycogenin dimers to continue glycogen polymerization on its own. May also form a heterooctamer complex with GYG1 (via GYG1 C-terminus). Phosphorylation reduces the activity towards UDP-alpha-D-glucose. Primed phosphorylation at Ser-657 (site 5) by CSNK2A1 and CSNK2A2 is required for inhibitory phosphorylation at Ser-641 (site 3a), Ser-645 (site 3b), Ser-649 (site 3c) and Ser-653 (site 4) by GSK3A an GSK3B. Dephosphorylation at Ser-641 and Ser-645 by PP1 activates the enzyme. Phosphorylation at Ser-8 is not required for interaction with GYG1. Interaction with GYG1 does not regulate the phosphorylation at Ser-8 and Ser-641. Specifically expressed in liver.

The catalysed reaction is [(1-&gt;4)-alpha-D-glucosyl](n) + UDP-alpha-D-glucose = [(1-&gt;4)-alpha-D-glucosyl](n+1) + UDP + H(+). Its pathway is glycan biosynthesis; glycogen biosynthesis. Allosteric activation by glucose-6-phosphate. Phosphorylation reduces the activity towards UDP-glucose. When in the non-phosphorylated state, glycogen synthase does not require glucose-6-phosphate as an allosteric activator; when phosphorylated it does. Functionally, glycogen synthase participates in the glycogen biosynthetic process along with glycogenin and glycogen branching enzyme. Extends the primer composed of a few glucose units formed by glycogenin by adding new glucose units to it. In this context, glycogen synthase transfers the glycosyl residue from UDP-Glc to the non-reducing end of alpha-1,4-glucan. The chain is Glycogen [starch] synthase, liver from Mus musculus (Mouse).